Here is a 41-residue protein sequence, read N- to C-terminus: Maticotoxin A (41 aa).

Disulfide bonds link Cys-3/Cys-22 and Cys-15/Cys-39.

Belongs to the three-finger toxin family. Short-chain subfamily. As to expression, expressed by the venom gland.

It is found in the secreted. This Calliophis bivirgatus (Blue Malaysian coral snake) protein is Maticotoxin A.